An 815-amino-acid chain; its full sequence is Neuronal PAS domain-containing protein 2 (815 aa).

The segment covering 1–10 (MDEDEKDRAK) has biased composition (basic and acidic residues). The segment at 1–21 (MDEDEKDRAKRASRNKSEKKR) is disordered. A sufficient for heterodimer formation with BMAL1, E-box binding and for the effect of NADPH region spans residues 1 to 61 (MDEDEKDRAK…VIGFLQKHNE (61 aa)). Residues 9–59 (AKRASRNKSEKKRRDQFNVLIKELSSMLPGNTRKMDKTTVLEKVIGFLQKH) enclose the bHLH domain. A PAS 1 domain is found at 82 to 152 (NEEFTQLMLE…KMLSSCMLMT (71 aa)). Heme b-binding residues include His-119 and His-171. Residues 237–307 (FLKEMCIVEE…RCHEHLMQFG (71 aa)) enclose the PAS 2 domain. Positions 311 to 354 (SCCYRFLTKGQQWIWLQTHYYITYHQWNSKPEFIVCTHMVVSYA) constitute a PAC domain. Over residues 405–420 (RTPSVSSRSSPKSSHT) the composition is skewed to low complexity. 3 disordered regions span residues 405 to 467 (RTPS…SLPS), 584 to 656 (PGQI…AAGC), and 728 to 815 (FATT…QPLR). Polar residues-rich tracts occupy residues 425 to 462 (PAST…TALQ), 588 to 608 (ASPQ…SSQG), and 616 to 630 (ELTT…STAT). Low complexity-rich tracts occupy residues 633–655 (GPST…SAAG) and 732–752 (PPSQ…HQQQ). The segment covering 753-786 (RYLQVQTPSSLHNEQTDSLLLSSYSPQQGNMGYH) has biased composition (polar residues). A compositionally biased stretch (low complexity) spans 787–815 (QTQQQQQQQQLPRRSNSLSESSNLPQPLR).

In terms of assembly, component of the circadian clock oscillator which includes the CRY proteins, CLOCK or NPAS2, BMAL1 or BMAL2, CSNK1D and/or CSNK1E, TIMELESS and the PER proteins. Efficient DNA binding requires dimerization with another bHLH protein. Forms a heterodimer with BMAL1 and this heterodimerization is required for E-box-dependent transactivation. Heme serves as cofactor. As to expression, expressed in the retinal photoreceptor cells (at protein level). Expressed in the pineal gland and retina.

It is found in the nucleus. Carbon monoxide (CO) and the redox state of the cell can modulate the transcriptional activity of the NPAS2-BMAL1 heterodimer. NADH and NADPH enhance the DNA-binding activity of the heterodimer whereas CO binds the heme group in NPAS2 and inhibits the DNA-binding activity of the heterodimer. Transcriptional activator which forms a core component of the circadian clock. The circadian clock, an internal time-keeping system, regulates various physiological processes through the generation of approximately 24 hour circadian rhythms in gene expression, which are translated into rhythms in metabolism and behavior. It is derived from the Latin roots 'circa' (about) and 'diem' (day) and acts as an important regulator of a wide array of physiological functions including metabolism, sleep, body temperature, blood pressure, endocrine, immune, cardiovascular, and renal function. Consists of two major components: the central clock, residing in the suprachiasmatic nucleus (SCN) of the brain, and the peripheral clocks that are present in nearly every tissue and organ system. Both the central and peripheral clocks can be reset by environmental cues, also known as Zeitgebers (German for 'timegivers'). The predominant Zeitgeber for the central clock is light, which is sensed by retina and signals directly to the SCN. The central clock entrains the peripheral clocks through neuronal and hormonal signals, body temperature and feeding-related cues, aligning all clocks with the external light/dark cycle. Circadian rhythms allow an organism to achieve temporal homeostasis with its environment at the molecular level by regulating gene expression to create a peak of protein expression once every 24 hours to control when a particular physiological process is most active with respect to the solar day. Transcription and translation of core clock components (CLOCK, NPAS2, BMAL1, BMAL2, PER1, PER2, PER3, CRY1 and CRY2) plays a critical role in rhythm generation, whereas delays imposed by post-translational modifications (PTMs) are important for determining the period (tau) of the rhythms (tau refers to the period of a rhythm and is the length, in time, of one complete cycle). A diurnal rhythm is synchronized with the day/night cycle, while the ultradian and infradian rhythms have a period shorter and longer than 24 hours, respectively. Disruptions in the circadian rhythms contribute to the pathology of cardiovascular diseases, cancer, metabolic syndromes and aging. A transcription/translation feedback loop (TTFL) forms the core of the molecular circadian clock mechanism. Transcription factors, CLOCK or NPAS2 and BMAL1 or BMAL2, form the positive limb of the feedback loop, act in the form of a heterodimer and activate the transcription of core clock genes and clock-controlled genes (involved in key metabolic processes), harboring E-box elements (5'-CACGTG-3') within their promoters. The core clock genes: PER1/2/3 and CRY1/2 which are transcriptional repressors form the negative limb of the feedback loop and interact with the CLOCK|NPAS2-BMAL1|BMAL2 heterodimer inhibiting its activity and thereby negatively regulating their own expression. This heterodimer also activates nuclear receptors NR1D1/2 and RORA/B/G, which form a second feedback loop and which activate and repress BMAL1 transcription, respectively. NPAS2 positively regulates the circadian expression of AANAT in the retinal photoreceptor cells. The sequence is that of Neuronal PAS domain-containing protein 2 (NPAS2) from Gallus gallus (Chicken).